The sequence spans 379 residues: UDP-4-amino-4-deoxy-L-arabinose--oxoglutarate aminotransferase (379 aa).

N6-(pyridoxal phosphate)lysine is present on lysine 182.

This sequence belongs to the DegT/DnrJ/EryC1 family. ArnB subfamily. In terms of assembly, homodimer. It depends on pyridoxal 5'-phosphate as a cofactor.

The enzyme catalyses UDP-4-amino-4-deoxy-beta-L-arabinose + 2-oxoglutarate = UDP-beta-L-threo-pentopyranos-4-ulose + L-glutamate. Its pathway is nucleotide-sugar biosynthesis; UDP-4-deoxy-4-formamido-beta-L-arabinose biosynthesis; UDP-4-deoxy-4-formamido-beta-L-arabinose from UDP-alpha-D-glucuronate: step 2/3. The protein operates within bacterial outer membrane biogenesis; lipopolysaccharide biosynthesis. Its function is as follows. Catalyzes the conversion of UDP-4-keto-arabinose (UDP-Ara4O) to UDP-4-amino-4-deoxy-L-arabinose (UDP-L-Ara4N). The modified arabinose is attached to lipid A and is required for resistance to polymyxin and cationic antimicrobial peptides. The protein is UDP-4-amino-4-deoxy-L-arabinose--oxoglutarate aminotransferase of Shigella boydii serotype 4 (strain Sb227).